Reading from the N-terminus, the 33-residue chain is Cytochrome b6-f complex subunit 8 (33 aa).

The helical transmembrane segment at 2–22 (LFTIAWASLAAVFSFSIAMVV) threads the bilayer.

This sequence belongs to the PetN family. As to quaternary structure, the 4 large subunits of the cytochrome b6-f complex are cytochrome b6, subunit IV (17 kDa polypeptide, PetD), cytochrome f and the Rieske protein, while the 4 small subunits are PetG, PetL, PetM and PetN. The complex functions as a dimer.

Its subcellular location is the cellular thylakoid membrane. Component of the cytochrome b6-f complex, which mediates electron transfer between photosystem II (PSII) and photosystem I (PSI), cyclic electron flow around PSI, and state transitions. This is Cytochrome b6-f complex subunit 8 from Synechococcus sp. (strain CC9311).